The sequence spans 714 residues: Methyl-accepting chemotaxis protein TlpQ (714 aa).

The helical transmembrane segment at 12–32 (ITLLAGLCLLGVVALLVGLSV) threads the bilayer. The Cache domain maps to 50 to 290 (LDESARLRLE…LLGKNLAKAD (241 aa)). Histamine contacts are provided by residues glutamate 170, 208–210 (YFD), and aspartate 239. The helical transmembrane segment at 360-380 (TWVELGLGLGAAVLGLLVLWL) threads the bilayer. The HAMP domain occupies 383-437 (RGVTRPILGVAHMLRDIASGEGDLTQRLPHTGRDELGELAGWFNRFLDKLQPIIR). The Methyl-accepting transducer domain maps to 442–678 (SVRDARSTAD…EINRNVAAIR (237 aa)).

It belongs to the methyl-accepting chemotaxis (MCP) protein family. Homotetramer.

The protein localises to the cell membrane. Functionally, chemotactic-signal transducers respond to changes in the concentration of attractants and repellents in the environment, transduce a signal from the outside to the inside of the cell, and facilitate sensory adaptation through the variation of the level of methylation. TlpQ is a chemoreceptor that binds and mediates chemotaxis to histamine, a key biological signaling molecule. It binds histamine with high affinity, which permits responses to very low histamine concentrations. Chemotaxis to histamine may play a role in the virulence of P.aeruginosa by recruiting cells at the infection site and consequently modulating the expression of quorum-sensing-dependent virulence genes. TlpQ also binds and mediates chemotaxis to polyamines such as putrescine, spermidine, cadaverine, agmatine and ethylenediamine. In addition, binds the quorum-sensing signal autoinducer 2 (AI-2), thus inducing chemotaxis toward AI-2 and biofilm formation. This Pseudomonas aeruginosa (strain ATCC 15692 / DSM 22644 / CIP 104116 / JCM 14847 / LMG 12228 / 1C / PRS 101 / PAO1) protein is Methyl-accepting chemotaxis protein TlpQ.